The sequence spans 88 residues: Small ribosomal subunit protein uS15 (88 aa).

The segment covering 1–12 (MLTNTDRQQVIA) has biased composition (polar residues). The segment at 1–23 (MLTNTDRQQVIAQYQRAPGDTGS) is disordered.

The protein belongs to the universal ribosomal protein uS15 family. Part of the 30S ribosomal subunit. Forms a bridge to the 50S subunit in the 70S ribosome, contacting the 23S rRNA.

In terms of biological role, one of the primary rRNA binding proteins, it binds directly to 16S rRNA where it helps nucleate assembly of the platform of the 30S subunit by binding and bridging several RNA helices of the 16S rRNA. Forms an intersubunit bridge (bridge B4) with the 23S rRNA of the 50S subunit in the ribosome. In Psychrobacter sp. (strain PRwf-1), this protein is Small ribosomal subunit protein uS15.